A 1470-amino-acid chain; its full sequence is Rap guanine nucleotide exchange factor (1470 aa).

2 disordered regions span residues P130 to D227 and H250 to M313. Residues M173–L183 show a composition bias toward pro residues. Low complexity-rich tracts occupy residues R184–P193 and T215–S224. The span at N256 to I266 shows a compositional bias: polar residues. The span at R275–G292 shows a compositional bias: low complexity. A nucleoside 3',5'-cyclic phosphate is bound at residue A347–G463. An N-terminal Ras-GEF domain is found at C478–K592. Residues Q597–L679 enclose the PDZ domain. The 88-residue stretch at P782–R869 folds into the Ras-associating domain. In terms of domain architecture, Ras-GEF spans N894–R1124. The span at Q1176–N1189 shows a compositional bias: polar residues. 4 disordered regions span residues Q1176–S1213, K1253–P1326, V1347–S1370, and A1422–T1455. Residues P1198–Q1211 are compositionally biased toward low complexity. 2 stretches are compositionally biased toward polar residues: residues Q1260 to R1274 and R1282 to D1308. The span at N1309–F1321 shows a compositional bias: basic and acidic residues. Over residues P1349–S1370 the composition is skewed to low complexity.

This sequence belongs to the RAPGEF2 family. Expressed in hermaphrodite-specific neurons (HSNs), oviduct sheath cells and lateral seam cells.

Its function is as follows. Acts as a guanine nucleotide exchange factor for small G protein GTPases like rap-1 and rap-2. Required in the hypodermis, especially in the seam cells, for proper formation of the cuticle. This Caenorhabditis elegans protein is Rap guanine nucleotide exchange factor (pxf-1).